Consider the following 424-residue polypeptide: Serine--tRNA ligase 1 (424 aa).

232 to 234 (TAE) is an L-serine binding site. Residue 263 to 265 (RSE) participates in ATP binding. Glu-286 lines the L-serine pocket. Residue 350–353 (EISS) participates in ATP binding. Ser-386 contributes to the L-serine binding site.

This sequence belongs to the class-II aminoacyl-tRNA synthetase family. Type-1 seryl-tRNA synthetase subfamily. As to quaternary structure, homodimer. The tRNA molecule binds across the dimer.

It localises to the cytoplasm. It catalyses the reaction tRNA(Ser) + L-serine + ATP = L-seryl-tRNA(Ser) + AMP + diphosphate + H(+). It carries out the reaction tRNA(Sec) + L-serine + ATP = L-seryl-tRNA(Sec) + AMP + diphosphate + H(+). The protein operates within aminoacyl-tRNA biosynthesis; selenocysteinyl-tRNA(Sec) biosynthesis; L-seryl-tRNA(Sec) from L-serine and tRNA(Sec): step 1/1. Its function is as follows. Catalyzes the attachment of serine to tRNA(Ser). Is also able to aminoacylate tRNA(Sec) with serine, to form the misacylated tRNA L-seryl-tRNA(Sec), which will be further converted into selenocysteinyl-tRNA(Sec). This chain is Serine--tRNA ligase 1, found in Clostridium acetobutylicum (strain ATCC 824 / DSM 792 / JCM 1419 / IAM 19013 / LMG 5710 / NBRC 13948 / NRRL B-527 / VKM B-1787 / 2291 / W).